A 365-amino-acid chain; its full sequence is MGAMAPRTLLLLLAAALGPTQTRAGSHSLRYFVTAVSRPGFGEPRYMEVGYVDNTEFVRFDSDAENPRYEPRARWIEQEGPEYWERETRRAKGNEQSFRVDLRTALRYYNQSAGGSHTLQWMAGCDVESDGRLLRGYWQFAYDGCDYIALNEDLKTWTAADMAAQITRRKWEQAGAAERDRAYLEGECVEWLRRYLKNGNATLLRTDPPKAHVTHHRRPEGDVTLRCWALGFYPADITLTWQLNGEELTQEMELVETRPAGDGTFQKWASVVVPLGKEQKYTCHVEHEGLPEPLTLRWGKEEPPSSTKTNTVIIAVPVVLGAVVILGAVMAFVMKRRRNTGGKGGDYALAPGSQSSDMSLPDCKV.

The N-terminal stretch at 1 to 24 (MGAMAPRTLLLLLAAALGPTQTRA) is a signal peptide. The alpha-1 stretch occupies residues 25-114 (GSHSLRYFVT…ALRYYNQSAG (90 aa)). Over 25–311 (GSHSLRYFVT…EPPSSTKTNT (287 aa)) the chain is Extracellular. Residue N110 is glycosylated (N-linked (GlcNAc...) asparagine). Residues 115–206 (GSHTLQWMAG…KNGNATLLRT (92 aa)) form an alpha-2 region. C125 and C188 are joined by a disulfide. The N-linked (GlcNAc...) asparagine glycan is linked to N200. An alpha-3 region spans residues 207–298 (DPPKAHVTHH…GLPEPLTLRW (92 aa)). Positions 209-297 (PKAHVTHHRR…EGLPEPLTLR (89 aa)) constitute an Ig-like C1-type domain. C227 and C283 are oxidised to a cystine. Residues 299-311 (GKEEPPSSTKTNT) form a connecting peptide region. Residues 312-334 (VIIAVPVVLGAVVILGAVMAFVM) traverse the membrane as a helical segment. Topologically, residues 335 to 365 (KRRRNTGGKGGDYALAPGSQSSDMSLPDCKV) are cytoplasmic. Residues 343–365 (KGGDYALAPGSQSSDMSLPDCKV) form a disordered region. Phosphoserine occurs at positions 356 and 359.

This sequence belongs to the MHC class I family. As to quaternary structure, heterodimer of an alpha chain and a beta chain (beta-2-microglobulin).

The protein resides in the membrane. Functionally, involved in the presentation of foreign antigens to the immune system. The chain is H-2 class I histocompatibility antigen, D-D alpha chain (H2-D1) from Mus musculus (Mouse).